The sequence spans 418 residues: Inward rectifier potassium channel 16 (418 aa).

Residues 1–67 are Cytoplasmic-facing; that stretch reads MSYYGSSYHI…VVDIFTTLVD (67 aa). The helical transmembrane segment at 68–94 threads the bilayer; that stretch reads TKWRHMFVIFSLSYILSWLIFGSVFWL. Topologically, residues 95-117 are extracellular; that stretch reads IAFHHGDLLNDPDITPCVDNVHS. An intramembrane region (helical; Pore-forming) is located at residues 118–134; the sequence is FTGAFLFSLETQTTIGY. A Selectivity filter motif is present at residues 131–136; that stretch reads TIGYGY. Residues 135–143 are Extracellular-facing; it reads GYRCVTEEC. A helical transmembrane segment spans residues 144–171; that stretch reads SVAVLMVILQSILSCIINTFIIGAALAK. The Cytoplasmic segment spans residues 172-418; it reads MATARKRAQT…LNRISVESQM (247 aa). Phosphoserine occurs at positions 373 and 375.

The protein belongs to the inward rectifier-type potassium channel (TC 1.A.2.1) family. KCNJ16 subfamily. It forms heteromeric channels with Kir4.1/KCNJ10; this interaction is required for KCNJ16 localization to the basolateral membrane in kidney cells. As a heteromer with KCNJ10, may interact with MAGI1; this interaction may facilitate KCNJ10/KCNJ16 potassium channel expression at the basolateral membrane in kidney cells. May form heteromers with Kir2.1/KCNJ2. Can form heteromeric channels with Kir4.2/KCNJ15. As to expression, widely expressed, with highest levels in adult and fetal kidney (at protein level). In the kidney, expressed in the proximal and distal convoluted tubules, but not in glomeruli nor collecting ducts.

The protein resides in the membrane. It is found in the basolateral cell membrane. It carries out the reaction K(+)(in) = K(+)(out). Channel activity is strongly regulated by variations of cytosolic pH; channels are activated by alkaline and inhibited by acidic pH values. Activated by phosphatidylinositol 4,5 biphosphate (PtdIns(4,5)P2). Inward rectifier potassium channels are characterized by a greater tendency to allow potassium to flow into the cell rather than out of it. Their voltage dependence is regulated by the concentration of extracellular potassium; as external potassium is raised, the voltage range of the channel opening shifts to more positive voltages. The inward rectification is mainly due to the blockage of outward current by internal magnesium. KCNJ16 may be involved in the regulation of fluid and pH balance. In the kidney, together with KCNJ10, mediates basolateral K(+) recycling in distal tubules; this process is critical for Na(+) reabsorption at the tubules. The sequence is that of Inward rectifier potassium channel 16 (KCNJ16) from Homo sapiens (Human).